The primary structure comprises 487 residues: Putative beta-glucosidase 35 (487 aa).

The signal sequence occupies residues 1 to 27 (MGIRMGRRLLLITLLLGALLCNNVAYA). A beta-D-glucoside is bound at residue glutamine 48. 2 N-linked (GlcNAc...) asparagine glycosylation sites follow: asparagine 76 and asparagine 116. A beta-D-glucoside is bound by residues histidine 151 and 200-201 (NE). Glutamate 201 serves as the catalytic Proton donor. Cysteine 220 and cysteine 228 are joined by a disulfide. Residue tyrosine 344 coordinates a beta-D-glucoside. Asparagine 369 carries an N-linked (GlcNAc...) asparagine glycan. Glutamate 414 lines the a beta-D-glucoside pocket. Catalysis depends on glutamate 414, which acts as the Nucleophile. Asparagine 418 and asparagine 419 each carry an N-linked (GlcNAc...) asparagine glycan. Residue phenylalanine 458 coordinates a beta-D-glucoside.

The protein belongs to the glycosyl hydrolase 1 family.

It carries out the reaction Hydrolysis of terminal, non-reducing beta-D-glucosyl residues with release of beta-D-glucose.. This chain is Putative beta-glucosidase 35 (BGLU35), found in Oryza sativa subsp. japonica (Rice).